The primary structure comprises 189 residues: Photosystem I assembly protein Ycf4 (189 aa).

2 consecutive transmembrane segments (helical) span residues Ser25–Leu45 and Leu62–Gly82.

This sequence belongs to the Ycf4 family.

It is found in the cellular thylakoid membrane. Seems to be required for the assembly of the photosystem I complex. The chain is Photosystem I assembly protein Ycf4 from Synechococcus sp. (strain JA-2-3B'a(2-13)) (Cyanobacteria bacterium Yellowstone B-Prime).